The chain runs to 503 residues: Probable voltage-gated potassium channel subunit kvs-4 (503 aa).

The Cytoplasmic segment spans residues 1–231; sequence MNSAIMQGAA…EPASSGKAQA (231 aa). Residues 217–219 carry the Required for dendritic localization motif; the sequence is WNI. Residues 232–252 form a helical membrane-spanning segment; it reads FAVCSVVFVLISISGLVLGSL. Residues 253-275 lie on the Extracellular side of the membrane; sequence PELQVATKQRNNLTGEEFTEMEP. Asparagine 264 carries N-linked (GlcNAc...) asparagine glycosylation. A helical membrane pass occupies residues 276 to 296; sequence MPILGYIEYVCIVWFTMEYGL. Residues 297–313 lie on the Cytoplasmic side of the membrane; that stretch reads KMLVSAERSKTFRQLLN. A helical membrane pass occupies residues 314-334; that stretch reads IIDLLAILPFIIEMLLLIFGI. The Extracellular portion of the chain corresponds to 335-346; that stretch reads STEQLRDLKGAF. Residues 347 to 366 form a helical; Voltage-sensor membrane-spanning segment; it reads LVIRILRVLRVIRVLKLGRY. At 367–383 the chain is on the cytoplasmic side; the sequence is SSGLQMFGKTLKASFRQ. Positions 368 to 383 are S4-S5 linker; it reads SGLQMFGKTLKASFRQ. The helical transmembrane segment at 384-404 threads the bilayer; that stretch reads LGMMAMVVMTGVIFFSTLVYF. Residues 405 to 417 are Extracellular-facing; the sequence is LEKDEPASKFHSI. Residues 418-429 constitute an intramembrane region (helical); sequence PAACWWCIVTMT. An intramembrane segment occupies 430–434; the sequence is TVGYG. A Selectivity filter motif is present at residues 430–435; it reads TVGYGD. The Extracellular portion of the chain corresponds to 435-445; sequence DLTPVTVPGKL. Residues 446-466 traverse the membrane as a helical segment; sequence VATGAIACGVLVLALPITIIV. Residues 467 to 503 lie on the Cytoplasmic side of the membrane; it reads DNFMKVAETERPAGGNRYRTSQYPKATKSEQMILKVT. Positions 496 to 500 match the Required for dendritic localization motif; it reads EQMIL.

It belongs to the potassium channel family. B (Shab) (TC 1.A.1.2) subfamily. Kv2.2/KCNB2 sub-subfamily. Homotetramer or heterotetramer. Interacts with unc-101 (via N-terminus); which targets kvs-4 to dendrites. Expressed in the cholinergic motor neuron DA9, mechanosensory neurons ALM and PLM, and the interneuron PVPL.

It localises to the cell membrane. The protein localises to the perikaryon. Its subcellular location is the cell projection. It is found in the axon. The protein resides in the dendrite. In terms of biological role, voltage-gated potassium channel that mediates transmembrane potassium transport in excitable membranes. The sequence is that of Probable voltage-gated potassium channel subunit kvs-4 from Caenorhabditis elegans.